The chain runs to 133 residues: Holo-[acyl-carrier-protein] synthase (133 aa).

Residues Asp-8 and Glu-57 each coordinate Mg(2+).

It belongs to the P-Pant transferase superfamily. AcpS family. The cofactor is Mg(2+).

The protein localises to the cytoplasm. The enzyme catalyses apo-[ACP] + CoA = holo-[ACP] + adenosine 3',5'-bisphosphate + H(+). Its function is as follows. Transfers the 4'-phosphopantetheine moiety from coenzyme A to a Ser of acyl-carrier-protein. This is Holo-[acyl-carrier-protein] synthase from Chelativorans sp. (strain BNC1).